Consider the following 66-residue polypeptide: Large ribosomal subunit protein bL33c (66 aa).

The protein belongs to the bacterial ribosomal protein bL33 family.

It localises to the plastid. It is found in the chloroplast. The protein is Large ribosomal subunit protein bL33c of Ipomoea purpurea (Common morning glory).